We begin with the raw amino-acid sequence, 352 residues long: MRGAYYVLIALLVVASSQTSAESGHQLQVYDHDFVAADTAAATTLPRQFLRGSRNVPGDLAHEERAITSELVEEGAKLIPRAAENVEEISRVAEAVGKRPRVAEEDVLNKASGANEAFKKPRNTATDDAFQGISTEQLLPLSYKQWDTEIKSMRIPKPEKYQNNIQSVYDAFVDVCDEDLKPTISETARLWNLFDRSFKPLTTRLHQQALAQFAKEYVLRDELRLKTEWARMNERTMPNRAGMLNMKLNWHFQRWVRMYNKFGERRSELIGTPLNVARSRGGTTGASRGTALHRHSIVPLNAASTSKGKSSVFTERSQRTFDDNTDIASPPSKHIKGQSSELVEPEGHRSKP.

An N-terminal signal peptide occupies residues 1-21 (MRGAYYVLIALLVVASSQTSA). The short motif at 48-65 (QFLRGSRNVPGDLAHEER) is the RxLR-dEER element. The segment covering 280 to 290 (RGGTTGASRGT) has biased composition (low complexity). Residues 280-352 (RGGTTGASRG…VEPEGHRSKP (73 aa)) form a disordered region. Residues 302–315 (AASTSKGKSSVFTE) show a composition bias toward polar residues.

The protein belongs to the RxLR effector family.

Its subcellular location is the secreted. It is found in the host nucleus. Secreted effector that acts as an elicitor that induces cell death in host plant cells. The chain is Secreted RxLR effector protein 122 from Plasmopara viticola (Downy mildew of grapevine).